Consider the following 476-residue polypeptide: S-adenosylmethionine-dependent nucleotide dehydratase (476 aa).

Residues 1 to 168 are cytidylate kinase-like domain; sequence MKTKITLSGF…LTANEVADLI (168 aa). Position 9 to 17 (9 to 17) interacts with ATP; sequence GFAGTGKST. The 225-residue stretch at 176 to 400 folds into the Radical SAM core domain; sequence NAVSKIPSVN…HKDVETIVPE (225 aa). The prokaryotic viperin domain stretch occupies residues 183 to 476; the sequence is SVNFHLWQPC…DLRKEEVSYE (294 aa). [4Fe-4S] cluster is bound by residues Cys192, Cys196, and Cys199.

It in the N-terminal section; belongs to the cytidylate kinase-like family. The protein in the C-terminal section; belongs to the radical SAM superfamily. Viperin family. The cofactor is [4Fe-4S] cluster.

The catalysed reaction is GTP + AH2 + S-adenosyl-L-methionine = 3'-deoxy-3',4'-didehydro-GTP + 5'-deoxyadenosine + L-methionine + A + H2O + H(+). Functionally, expression of pVip60 in E.coli (strain MG1655) confers resistance to phage T7; prevents culture collapse upon infection. Catalyzes the conversion of guanosine triphosphate (GTP) to 3'-deoxy-3',4'-didehydro-GTP (ddhGTP), probably via a SAM-dependent radical mechanism. The modified nucleotide represses transcription from T7 RNA polymerase-directed genes (possibly by acting as chain terminators), strongly suggesting these nucleotides block viral polymerase transcription. In terms of biological role, the N-terminus of the protein may generate NTP for use by the viperin domain. The polypeptide is S-adenosylmethionine-dependent nucleotide dehydratase (Lacinutrix mariniflava (strain JCM 13824 / KCCM 42306 / AKS432)).